Reading from the N-terminus, the 304-residue chain is Protein BOBBER 1 (304 aa).

The residue at position 2 (Ala2) is an N-acetylalanine. Positions 54-106 (EDEIVVAVRAAKEKLKKAEKKKAEKESVKPVEKKAEKEIVKLVEKKVEKESVK) form a coiled coil. The tract at residues 111 to 141 (ASSAEPIEVEKPKEEEEKKESGPIVPNKGNG) is disordered. Positions 118 to 131 (EVEKPKEEEEKKES) are enriched in basic and acidic residues. The region spanning 142–231 (TDLENYSWIQ…DQMEWWKCCV (90 aa)) is the CS domain.

As to expression, expressed in all seedling tissues with highest expression levels at the root tip.

It localises to the cytoplasm. Its subcellular location is the cytoplasmic granule. In terms of biological role, small heat shock protein required for the establishment of auxin gradients and for patterning of the apical domain of the embryo. Involved in the specification of the cotyledon primordia. Also required for normal inflorescence and floral meristem function, normal developmental patterning and thermotolerance. Acts as a molecular chaperone. This is Protein BOBBER 1 (BOB1) from Arabidopsis thaliana (Mouse-ear cress).